We begin with the raw amino-acid sequence, 247 residues long: Large ribosomal subunit protein uL24m (247 aa).

The KOW domain maps to 84–117 (FFRGDRIEVLVGKDKGKQGIVTQVIPERNWVIVE).

The protein belongs to the universal ribosomal protein uL24 family. In terms of assembly, component of the mitochondrial ribosome large subunit (39S) which comprises a 16S rRNA and about 50 distinct proteins.

It is found in the mitochondrion. The sequence is that of Large ribosomal subunit protein uL24m (mRpL24) from Drosophila pseudoobscura pseudoobscura (Fruit fly).